The sequence spans 173 residues: NADH-ubiquinone oxidoreductase chain 6 (173 aa).

A run of 5 helical transmembrane segments spans residues 1 to 21 (MTYL…AVAS), 24 to 44 (APYF…GVLV), 53 to 73 (LVLF…SAAL), 86 to 106 (SVVG…GVFW), and 139 to 159 (YGGG…FVVL).

This sequence belongs to the complex I subunit 6 family.

It is found in the mitochondrion membrane. It carries out the reaction a ubiquinone + NADH + 5 H(+)(in) = a ubiquinol + NAD(+) + 4 H(+)(out). Its function is as follows. Core subunit of the mitochondrial membrane respiratory chain NADH dehydrogenase (Complex I) that is believed to belong to the minimal assembly required for catalysis. Complex I functions in the transfer of electrons from NADH to the respiratory chain. The immediate electron acceptor for the enzyme is believed to be ubiquinone. This chain is NADH-ubiquinone oxidoreductase chain 6 (MT-ND6), found in Formosania lacustris (Oriental stream loach).